Here is a 332-residue protein sequence, read N- to C-terminus: Aspartate carbamoyltransferase catalytic subunit (332 aa).

Residues Arg-78 and Thr-79 each contribute to the carbamoyl phosphate site. Residue Lys-106 coordinates L-aspartate. Carbamoyl phosphate contacts are provided by Arg-128, His-156, and Gln-159. Arg-189 and Arg-243 together coordinate L-aspartate. Gly-284 and Pro-285 together coordinate carbamoyl phosphate.

Belongs to the aspartate/ornithine carbamoyltransferase superfamily. ATCase family. Heterododecamer (2C3:3R2) of six catalytic PyrB chains organized as two trimers (C3), and six regulatory PyrI chains organized as three dimers (R2).

The catalysed reaction is carbamoyl phosphate + L-aspartate = N-carbamoyl-L-aspartate + phosphate + H(+). Its pathway is pyrimidine metabolism; UMP biosynthesis via de novo pathway; (S)-dihydroorotate from bicarbonate: step 2/3. Catalyzes the condensation of carbamoyl phosphate and aspartate to form carbamoyl aspartate and inorganic phosphate, the committed step in the de novo pyrimidine nucleotide biosynthesis pathway. This Caulobacter vibrioides (strain ATCC 19089 / CIP 103742 / CB 15) (Caulobacter crescentus) protein is Aspartate carbamoyltransferase catalytic subunit.